Here is a 388-residue protein sequence, read N- to C-terminus: Deoxyuridine 5'-triphosphate nucleotidohydrolase (388 aa).

Residues 77–88 (EEKYDKEQHPGE) show a composition bias toward basic and acidic residues. 2 disordered regions span residues 77–96 (EEKY…SPLP) and 336–388 (THTP…PRHP). A compositionally biased stretch (acidic residues) spans 351–363 (VDDDVDETEEDEK).

It belongs to the dUTPase family. The cofactor is Mg(2+).

The protein localises to the virion. It catalyses the reaction dUTP + H2O = dUMP + diphosphate + H(+). The protein operates within pyrimidine metabolism; dUMP biosynthesis; dUMP from dCTP (dUTP route): step 2/2. Involved in nucleotide metabolism: produces dUMP, the immediate precursor of thymidine nucleotides and decreases the intracellular concentration of dUTP to avoid uracil incorporation into viral DNA. This chain is Deoxyuridine 5'-triphosphate nucleotidohydrolase, found in Human cytomegalovirus (strain AD169) (HHV-5).